The chain runs to 41 residues: Alpha-1B-glycoprotein (41 aa).

N-linked (GlcNAc...) asparagine glycosylation is present at asparagine 23.

Interacts with CRISP3. Post-translationally, glycosylated. In terms of tissue distribution, plasma.

The protein resides in the secreted. The chain is Alpha-1B-glycoprotein (A1BG) from Equus caballus (Horse).